A 64-amino-acid polypeptide reads, in one-letter code: Large ribosomal subunit protein bL35 (64 aa).

Belongs to the bacterial ribosomal protein bL35 family.

The sequence is that of Large ribosomal subunit protein bL35 from Desulforamulus reducens (strain ATCC BAA-1160 / DSM 100696 / MI-1) (Desulfotomaculum reducens).